Consider the following 318-residue polypeptide: Ribosomal RNA small subunit methyltransferase H (318 aa).

S-adenosyl-L-methionine contacts are provided by residues Ala38–His40, Asp57, Leu91, Asp105, and Gln112.

Belongs to the methyltransferase superfamily. RsmH family.

Its subcellular location is the cytoplasm. The enzyme catalyses cytidine(1402) in 16S rRNA + S-adenosyl-L-methionine = N(4)-methylcytidine(1402) in 16S rRNA + S-adenosyl-L-homocysteine + H(+). Its function is as follows. Specifically methylates the N4 position of cytidine in position 1402 (C1402) of 16S rRNA. The sequence is that of Ribosomal RNA small subunit methyltransferase H from Clavibacter michiganensis subsp. michiganensis (strain NCPPB 382).